We begin with the raw amino-acid sequence, 147 residues long: Large ribosomal subunit protein uL15 (147 aa).

The interval 1-59 (MKLYELKPAPGSKKNRKRVGRGESSGHGKTSTRGHKGQWARSGGGVRPGFEGGQMPLTR) is disordered. Positions 42-52 (SGGGVRPGFEG) are enriched in gly residues.

The protein belongs to the universal ribosomal protein uL15 family. In terms of assembly, part of the 50S ribosomal subunit.

In terms of biological role, binds to the 23S rRNA. The sequence is that of Large ribosomal subunit protein uL15 from Caldicellulosiruptor bescii (strain ATCC BAA-1888 / DSM 6725 / KCTC 15123 / Z-1320) (Anaerocellum thermophilum).